A 311-amino-acid polypeptide reads, in one-letter code: MKVAVLGAAGGIGQALALLLKTQLPAGSKLSLYDIAPVTPGVAVDLSHIPTAVEIKGFAGEDPTPALVGADVVLISAGVARKPGMDRSDLFNINAGIVRNLIEKVAVTCPKALVGIITNPVNTTVAIAAEVMKKAGVYDKNRLFGVTTLDVIRSETFIAELKGLNVADVKINVIGGHSGVTILPLLSQVEGVTFSDEEVASLTKRIQNAGTEVVEAKAGGGSATLSMGQAACRFGMSLVRGLQGEANVVECAYVDGGSEHAEFFAQPVLLGKNGIEKVLPYGEVSAFEANARDSMLDTLKGDIKLGVDFVK.

Residues 7 to 13 and D34 each bind NAD(+); that span reads GAAGGIG. 2 residues coordinate substrate: R81 and R87. Residues N94 and 117–119 each bind NAD(+); that span reads ITN. The substrate site is built by N119 and R153. H177 (proton acceptor) is an active-site residue. An NAD(+)-binding site is contributed by M227.

The protein belongs to the LDH/MDH superfamily. MDH type 1 family. Homodimer.

The enzyme catalyses (S)-malate + NAD(+) = oxaloacetate + NADH + H(+). In terms of biological role, catalyzes the reversible oxidation of malate to oxaloacetate. The chain is Malate dehydrogenase (mdh) from Shewanella oneidensis (strain ATCC 700550 / JCM 31522 / CIP 106686 / LMG 19005 / NCIMB 14063 / MR-1).